Consider the following 137-residue polypeptide: Probable S-adenosyl-L-methionine-binding protein MTH_1797 (137 aa).

The region spanning 8-137 (IRPVGVVRSP…YYEDIDSLGF (130 aa)) is the TsaA-like domain. Residues 25 to 27 (PAQ), 63 to 64 (HL), Arg87, Leu97, and 117 to 120 (LDGS) contribute to the S-adenosyl-L-methionine site.

This sequence belongs to the tRNA methyltransferase O family.

The sequence is that of Probable S-adenosyl-L-methionine-binding protein MTH_1797 from Methanothermobacter thermautotrophicus (strain ATCC 29096 / DSM 1053 / JCM 10044 / NBRC 100330 / Delta H) (Methanobacterium thermoautotrophicum).